The following is a 261-amino-acid chain: 3-deoxy-manno-octulosonate cytidylyltransferase (261 aa).

The protein belongs to the KdsB family.

The protein resides in the cytoplasm. The catalysed reaction is 3-deoxy-alpha-D-manno-oct-2-ulosonate + CTP = CMP-3-deoxy-beta-D-manno-octulosonate + diphosphate. The protein operates within nucleotide-sugar biosynthesis; CMP-3-deoxy-D-manno-octulosonate biosynthesis; CMP-3-deoxy-D-manno-octulosonate from 3-deoxy-D-manno-octulosonate and CTP: step 1/1. Its pathway is bacterial outer membrane biogenesis; lipopolysaccharide biosynthesis. Activates KDO (a required 8-carbon sugar) for incorporation into bacterial lipopolysaccharide in Gram-negative bacteria. The polypeptide is 3-deoxy-manno-octulosonate cytidylyltransferase (Marinobacter nauticus (strain ATCC 700491 / DSM 11845 / VT8) (Marinobacter aquaeolei)).